Consider the following 149-residue polypeptide: Epoxide hydrolase EphG (149 aa).

The active-site Proton donor is the Asp93. Asp122 functions as the Proton acceptor in the catalytic mechanism.

Belongs to the limonene-1,2-epoxide hydrolase family. In terms of assembly, homodimer. Is also present as monomer in solution.

The enzyme catalyses an epoxide + H2O = an ethanediol. It carries out the reaction 5,6alpha-epoxy-5alpha-cholestan-3beta-ol + H2O = 5alpha-cholestane-3beta,5,6beta-triol. The catalysed reaction is 5,6beta-epoxy-5beta-cholestan-3beta-ol + H2O = 5alpha-cholestane-3beta,5,6beta-triol. Its activity is regulated as follows. Is inhibited by the anti-epileptic drug valpromide (Ki value of about 100 uM). Epoxide hydrolase capable of hydrolyzing long or bulky lipophilic epoxides such as 9,10-epoxystearic acid and cholesterol 5,6-oxide in vitro. The physiological substrates have yet to be identified, but could be fatty acid or steroid derivatives. In Mycobacterium tuberculosis (strain ATCC 25618 / H37Rv), this protein is Epoxide hydrolase EphG (ephG).